The primary structure comprises 435 residues: MNIVILGTQWGDEGKGKIVDMLTEDVAAVVRFQGGHNAGHTLIIDGEKTILRLIPSGILREGVLCLIGNGVVLSPPALIEEIEELNAKGIPVTEQLRISSACNLLLPYHVALDKAREAELGTKAIGTTGRGIGPAYEDKVARRGIRAMDLLHPDQLLEKIKKATAYHNIQLEHYYHQTPLDYQSIYNQLMEFREKIKPMIGDVSALLGNLRRQNKHIIFEGAQGSLLDIDLGTYPYVTSSNTTAGSAATGSGFGPLYFDRVLGITKAYVTRVGAGPFPTELTNEEGKKMAKRGNEFGSVTGRPRRCGWFDVISMRRTIQINSLTGIVLTKLDVLDEFAKIHLCTAYRCDGEVVNEPPFDQSLLESCEPVYEEMPGWQTSTYGLTDYSEMPKEARNYISRLEELLGVPITIISTGPDRKHTIVRQAVFNQVITAKG.

GTP contacts are provided by residues 11-17 (GDEGKGK) and 39-41 (GHT). Residue D12 is the Proton acceptor of the active site. Mg(2+)-binding residues include D12 and G39. Residues 12–15 (DEGK), 37–40 (NAGH), T128, R142, Q223, T238, and R302 each bind IMP. The active-site Proton donor is H40. 298-304 (SVTGRPR) contacts substrate. GTP-binding positions include R304, 330-332 (KLD), and 412-414 (STG).

Belongs to the adenylosuccinate synthetase family. As to quaternary structure, homodimer. Requires Mg(2+) as cofactor.

It localises to the cytoplasm. It carries out the reaction IMP + L-aspartate + GTP = N(6)-(1,2-dicarboxyethyl)-AMP + GDP + phosphate + 2 H(+). It participates in purine metabolism; AMP biosynthesis via de novo pathway; AMP from IMP: step 1/2. In terms of biological role, plays an important role in the de novo pathway of purine nucleotide biosynthesis. Catalyzes the first committed step in the biosynthesis of AMP from IMP. The chain is Adenylosuccinate synthetase from Coxiella burnetii (strain RSA 331 / Henzerling II).